A 294-amino-acid polypeptide reads, in one-letter code: 2-hydroxy-3-oxopropionate reductase (294 aa).

NAD(+)-binding positions include 4 to 18 (GFIG…MSKN) and Ser-95. The active site involves Lys-170. Residue Lys-238 participates in NAD(+) binding.

This sequence belongs to the HIBADH-related family. 2-hydroxy-3-oxopropionate reductase subfamily.

It carries out the reaction (R)-glycerate + NADP(+) = 2-hydroxy-3-oxopropanoate + NADPH + H(+). The enzyme catalyses (R)-glycerate + NAD(+) = 2-hydroxy-3-oxopropanoate + NADH + H(+). It functions in the pathway carbohydrate acid metabolism; galactarate degradation; D-glycerate from galactarate: step 3/3. Catalyzes the reduction of tatronate semialdehyde to D-glycerate. In Escherichia coli O6:H1 (strain CFT073 / ATCC 700928 / UPEC), this protein is 2-hydroxy-3-oxopropionate reductase.